The following is a 61-amino-acid chain: Metallothionein-I, hippocampal (61 aa).

Residue M1 is modified to N-acetylmethionine. Residues 1–29 (MDPNCSCATGDSCACASTCKCKECKCTSC) form a beta region. Positions 5, 7, 13, 15, 19, 21, 24, 26, 29, 33, 34, 36, 37, 41, 44, 48, 50, and 57 each coordinate a divalent metal cation. The tract at residues 30–61 (KKSCCSCCPVGCAKCAQGCICKGASDKCSCCA) is alpha. Residue S58 is modified to Phosphoserine. A divalent metal cation is bound by residues C59 and C60.

This sequence belongs to the metallothionein superfamily. Type 1 family.

Metallothioneins have a high content of cysteine residues that bind various heavy metals; these proteins are transcriptionally regulated by both heavy metals and glucocorticoids. This isoform may play a role in regulating the transport, accumulation, and compartmentation of zinc in the hippocampus. This chain is Metallothionein-I, hippocampal, found in Bos taurus (Bovine).